The primary structure comprises 207 residues: NADH-quinone oxidoreductase subunit C (207 aa).

This sequence belongs to the complex I 30 kDa subunit family. In terms of assembly, NDH-1 is composed of 14 different subunits. Subunits NuoB, C, D, E, F, and G constitute the peripheral sector of the complex.

The protein localises to the cell inner membrane. The catalysed reaction is a quinone + NADH + 5 H(+)(in) = a quinol + NAD(+) + 4 H(+)(out). Functionally, NDH-1 shuttles electrons from NADH, via FMN and iron-sulfur (Fe-S) centers, to quinones in the respiratory chain. The immediate electron acceptor for the enzyme in this species is believed to be ubiquinone. Couples the redox reaction to proton translocation (for every two electrons transferred, four hydrogen ions are translocated across the cytoplasmic membrane), and thus conserves the redox energy in a proton gradient. This Jannaschia sp. (strain CCS1) protein is NADH-quinone oxidoreductase subunit C.